Reading from the N-terminus, the 365-residue chain is Peridinin-chlorophyll a-binding protein, chloroplastic (365 aa).

Residues 1–52 (MVRGARKAIAVGVAVAVACGLQKHLNFVPGPRHAAPVAAAAASMMMAPAAFA) constitute a chloroplast transit peptide. Repeat copies occupy residues 53-215 (DEIG…VPSG) and 216-365 (DKIG…ASQR).

As to quaternary structure, monomer.

It is found in the plastid. The protein localises to the chloroplast. Its function is as follows. Water-soluble antenna for capture of solar energy in the blue-green range. Peridinin is an asymmetric carotenoid. This is Peridinin-chlorophyll a-binding protein, chloroplastic from Symbiodinium sp. (Dinoflagellate).